The sequence spans 461 residues: Ribosomal protein uS12 methylthiotransferase RimO (461 aa).

The 116-residue stretch at 9–124 folds into the MTTase N-terminal domain; it reads PRIGMVSLGC…VMDAVHLNLP (116 aa). Residues Cys-18, Cys-54, Cys-83, Cys-159, Cys-163, and Cys-166 each coordinate [4Fe-4S] cluster. The Radical SAM core domain maps to 145-387; that stretch reads LTPRHYAYLK…AVAEAVSSQK (243 aa). One can recognise a TRAM domain in the interval 389–461; sequence QQRVGATMQV…QGHDLIAVPV (73 aa).

It belongs to the methylthiotransferase family. RimO subfamily. Requires [4Fe-4S] cluster as cofactor.

It localises to the cytoplasm. The catalysed reaction is L-aspartate(89)-[ribosomal protein uS12]-hydrogen + (sulfur carrier)-SH + AH2 + 2 S-adenosyl-L-methionine = 3-methylsulfanyl-L-aspartate(89)-[ribosomal protein uS12]-hydrogen + (sulfur carrier)-H + 5'-deoxyadenosine + L-methionine + A + S-adenosyl-L-homocysteine + 2 H(+). Functionally, catalyzes the methylthiolation of an aspartic acid residue of ribosomal protein uS12. The protein is Ribosomal protein uS12 methylthiotransferase RimO of Polaromonas naphthalenivorans (strain CJ2).